We begin with the raw amino-acid sequence, 177 residues long: Coatomer subunit zeta-1 (177 aa).

The protein belongs to the adaptor complexes small subunit family. In terms of assembly, oligomeric complex that consists of at least the alpha, beta, beta', gamma, delta, epsilon and zeta subunits.

Its subcellular location is the cytoplasm. It localises to the golgi apparatus membrane. The protein localises to the cytoplasmic vesicle. The protein resides in the COPI-coated vesicle membrane. Functionally, the coatomer is a cytosolic protein complex that binds to dilysine motifs and reversibly associates with Golgi non-clathrin-coated vesicles, which further mediate biosynthetic protein transport from the ER, via the Golgi up to the trans Golgi network. Coatomer complex is required for budding from Golgi membranes, and is essential for the retrograde Golgi-to-ER transport of dilysine-tagged proteins. The zeta subunit may be involved in regulating the coat assembly and, hence, the rate of biosynthetic protein transport due to its association-dissociation properties with the coatomer complex. This chain is Coatomer subunit zeta-1 (COPZ1), found in Oryza sativa subsp. japonica (Rice).